The sequence spans 315 residues: Methionyl-tRNA formyltransferase (315 aa).

Position 113–116 (113–116 (SILP)) interacts with (6S)-5,6,7,8-tetrahydrofolate.

The protein belongs to the Fmt family.

The enzyme catalyses L-methionyl-tRNA(fMet) + (6R)-10-formyltetrahydrofolate = N-formyl-L-methionyl-tRNA(fMet) + (6S)-5,6,7,8-tetrahydrofolate + H(+). Attaches a formyl group to the free amino group of methionyl-tRNA(fMet). The formyl group appears to play a dual role in the initiator identity of N-formylmethionyl-tRNA by promoting its recognition by IF2 and preventing the misappropriation of this tRNA by the elongation apparatus. The chain is Methionyl-tRNA formyltransferase from Vibrio parahaemolyticus serotype O3:K6 (strain RIMD 2210633).